The following is a 352-amino-acid chain: Selenide, water dikinase (352 aa).

Residue C21 is part of the active site. ATP is bound by residues K24 and 51–53 (TND). D54 is a Mg(2+) binding site. Residues D71, D94, and 141-143 (GHS) each bind ATP. A Mg(2+)-binding site is contributed by D94. D231 serves as a coordination point for Mg(2+).

The protein belongs to the selenophosphate synthase 1 family. Class I subfamily. In terms of assembly, homodimer. It depends on Mg(2+) as a cofactor.

It carries out the reaction hydrogenselenide + ATP + H2O = selenophosphate + AMP + phosphate + 2 H(+). Synthesizes selenophosphate from selenide and ATP. This Myxococcus xanthus (strain DK1622) protein is Selenide, water dikinase.